We begin with the raw amino-acid sequence, 147 residues long: MGWGFDLKVRVYDKIDKRKVFYMEANRYREARWKLVVNFPPKFLDATRYYCSVVWETCDDPNQCTLQVNDTCWGSTQWDAPEEYDPALEPLLTRLKSGEPLELVSYNRKRVNFYLTQTENVFWIRHSRVPWDWDIEADEPDVEIYYD.

This is an uncharacterized protein from Aedes vexans (Inland floodwater mosquito).